The chain runs to 152 residues: Protein ripply3 (152 aa).

Residues 1-24 (MRPEAAGVREARGRLCHCPGDDPG) show a composition bias toward basic and acidic residues. 2 disordered regions span residues 1-76 (MRPE…GAFG) and 113-152 (FYNDDSESGSEEEQEEEAQPNHLQCLEAEVRDSAQEERAE). A WRPW motif motif is present at residues 40-43 (WRPW). The interval 79–114 (HPVRLYLPVSKRQEYLQSSGEKVLASFPVQATIHFY) is ripply homology domain. Acidic residues predominate over residues 116–130 (DDSESGSEEEQEEEA). The segment covering 140 to 152 (AEVRDSAQEERAE) has biased composition (basic and acidic residues).

The protein belongs to the ripply family. In terms of assembly, interacts with TBX1.

The protein resides in the nucleus. Functionally, acts as a transcriptional corepressor. Negative regulator of the transcriptional activity of TBX1. Plays a role in the development of the pharyngeal apparatus and derivatives. The polypeptide is Protein ripply3 (Ripply3) (Mus musculus (Mouse)).